Consider the following 462-residue polypeptide: UDP-N-acetylmuramoylalanine--D-glutamate ligase (462 aa).

Residue 111 to 117 coordinates ATP; it reads GTNGKTT.

This sequence belongs to the MurCDEF family.

Its subcellular location is the cytoplasm. It catalyses the reaction UDP-N-acetyl-alpha-D-muramoyl-L-alanine + D-glutamate + ATP = UDP-N-acetyl-alpha-D-muramoyl-L-alanyl-D-glutamate + ADP + phosphate + H(+). It participates in cell wall biogenesis; peptidoglycan biosynthesis. Its function is as follows. Cell wall formation. Catalyzes the addition of glutamate to the nucleotide precursor UDP-N-acetylmuramoyl-L-alanine (UMA). This Trichodesmium erythraeum (strain IMS101) protein is UDP-N-acetylmuramoylalanine--D-glutamate ligase.